The following is a 305-amino-acid chain: GTPase Era (305 aa).

In terms of domain architecture, Era-type G spans 11-181 (RSGFISFVGR…LDVITRLLPE (171 aa)). Residues 19-26 (GRPNTGKS) form a G1 region. Position 19–26 (19–26 (GRPNTGKS)) interacts with GTP. A G2 region spans residues 45 to 49 (ETTRH). The G3 stretch occupies residues 66–69 (DTPG). Residues 66–70 (DTPGL) and 130–133 (TKVD) contribute to the GTP site. The segment at 130-133 (TKVD) is G4. A G5 region spans residues 160–162 (VSA). The KH type-2 domain maps to 212 to 291 (LKDELPHSVA…YLDLRIKVLK (80 aa)).

The protein belongs to the TRAFAC class TrmE-Era-EngA-EngB-Septin-like GTPase superfamily. Era GTPase family. In terms of assembly, monomer.

It localises to the cytoplasm. The protein resides in the cell membrane. Its function is as follows. An essential GTPase that binds both GDP and GTP, with rapid nucleotide exchange. Plays a role in 16S rRNA processing and 30S ribosomal subunit biogenesis and possibly also in cell cycle regulation and energy metabolism. This chain is GTPase Era, found in Corynebacterium diphtheriae (strain ATCC 700971 / NCTC 13129 / Biotype gravis).